Here is a 211-residue protein sequence, read N- to C-terminus: Pyruvate dehydrogenase E1 component subunit beta, mitochondrial (211 aa).

Tyr-31 bears the Phosphotyrosine mark. Ile-48, Ala-96, Ile-97, Asp-99, and Asn-101 together coordinate K(+).

Heterotetramer of two PDHA1 and two PDHB subunits. The heterotetramer interacts with DLAT, and is part of the multimeric pyruvate dehydrogenase complex that contains multiple copies of pyruvate dehydrogenase (E1), dihydrolipoamide acetyltransferase (DLAT, E2) and lipoamide dehydrogenase (DLD, E3). These subunits are bound to an inner core composed of about 48 DLAT and 12 PDHX molecules. Interacts with DLAT. The cofactor is thiamine diphosphate.

It is found in the mitochondrion matrix. The enzyme catalyses N(6)-[(R)-lipoyl]-L-lysyl-[protein] + pyruvate + H(+) = N(6)-[(R)-S(8)-acetyldihydrolipoyl]-L-lysyl-[protein] + CO2. Its function is as follows. The pyruvate dehydrogenase complex catalyzes the overall conversion of pyruvate to acetyl-CoA and CO(2), and thereby links the glycolytic pathway to the tricarboxylic cycle. This is Pyruvate dehydrogenase E1 component subunit beta, mitochondrial from Mesocricetus auratus (Golden hamster).